A 291-amino-acid polypeptide reads, in one-letter code: Homeobox protein knotted-1-like 7 (291 aa).

Residues glutamate 194–isoleucine 214 form the ELK domain. The homeobox; TALE-type DNA-binding region spans methionine 215–asparagine 278.

This sequence belongs to the TALE/KNOX homeobox family. May form heterodimeric complex with the TALE/BELL proteins. Interacts with OFP1, OFP2, OFP3, OFP4 and OFP6.

It localises to the nucleus. Functionally, may be involved in secondary cell wall biosynthesis. The sequence is that of Homeobox protein knotted-1-like 7 (KNAT7) from Arabidopsis thaliana (Mouse-ear cress).